The sequence spans 247 residues: Uridylate kinase (247 aa).

11–14 (KASG) is a binding site for ATP. The tract at residues 19–24 (GKQGFG) is involved in allosteric activation by GTP. Gly-53 contributes to the UMP binding site. ATP is bound by residues Gly-54 and Arg-58. UMP-binding positions include Asp-73 and 134–141 (TGNPFFTT). ATP-binding residues include Thr-161, Gln-162, Tyr-167, and Asp-170.

Belongs to the UMP kinase family. Homohexamer.

The protein localises to the cytoplasm. It catalyses the reaction UMP + ATP = UDP + ADP. Its pathway is pyrimidine metabolism; CTP biosynthesis via de novo pathway; UDP from UMP (UMPK route): step 1/1. With respect to regulation, allosterically activated by GTP. Inhibited by UTP. Its function is as follows. Catalyzes the reversible phosphorylation of UMP to UDP. In Chelativorans sp. (strain BNC1), this protein is Uridylate kinase.